The following is a 341-amino-acid chain: NADH-ubiquinone oxidoreductase chain 2 (341 aa).

10 consecutive transmembrane segments (helical) span residues 8-28 (ILFT…NSWL), 61-81 (FLTQ…LMLA), 95-115 (MIIM…FWFP), 121-141 (LTWM…LMLI), 146-166 (IKNL…IGGL), 174-194 (LMAF…MISE), 195-215 (SIWL…TFMF), 238-258 (FSLF…GFLP), 273-293 (FLLT…LRIC), and 321-341 (LIMT…FFML).

Belongs to the complex I subunit 2 family.

The protein resides in the mitochondrion inner membrane. The catalysed reaction is a ubiquinone + NADH + 5 H(+)(in) = a ubiquinol + NAD(+) + 4 H(+)(out). Functionally, core subunit of the mitochondrial membrane respiratory chain NADH dehydrogenase (Complex I) that is believed to belong to the minimal assembly required for catalysis. Complex I functions in the transfer of electrons from NADH to the respiratory chain. The immediate electron acceptor for the enzyme is believed to be ubiquinone. The sequence is that of NADH-ubiquinone oxidoreductase chain 2 (mt:ND2) from Drosophila yakuba (Fruit fly).